Consider the following 539-residue polypeptide: Efflux pump roqT (539 aa).

The tract at residues Met-1–Leu-25 is disordered. 12 helical membrane passes run Val-36–Ile-56, Leu-108–Ile-128, Ile-133–Val-153, Val-160–Gly-180, Trp-191–Phe-211, Ile-233–Gly-253, Arg-262–Ile-282, Trp-305–Phe-325, Val-338–Ile-360, Gly-362–Thr-384, Ile-395–Val-415, and Ala-502–Trp-522.

It belongs to the major facilitator superfamily. TCR/Tet family.

The protein localises to the membrane. Efflux pump; part of the gene cluster that mediates the biosynthesis of the mycotoxins roquefortine C and meleagrin. This Penicillium rubens (strain ATCC 28089 / DSM 1075 / NRRL 1951 / Wisconsin 54-1255) (Penicillium chrysogenum) protein is Efflux pump roqT.